Reading from the N-terminus, the 347-residue chain is Fe(2+) transport protein 1 (347 aa).

Residues 1–22 (MASNSALLMKTIFLVLIFVSFA) form the signal peptide. The Extracellular segment spans residues 23–52 (ISPATSTAPEECGSESANPCVNKAKALPLK). A helical transmembrane segment spans residues 53-73 (VIAIFVILIASMIGVGAPLFS). Over 74–84 (RNVSFLQPDGN) the chain is Cytoplasmic. The helical transmembrane segment at 85–105 (IFTIIKCFASGIILGTGFMHV) threads the bilayer. Topologically, residues 106 to 125 (LPDSFEMLSSICLEENPWHK) are extracellular. The chain crosses the membrane as a helical span at residues 126–146 (FPFSGFLAMLSGLITLAIDSM). The Cytoplasmic portion of the chain corresponds to 147 to 192 (ATSLYTSKNAVGIMPHGHGHGHGPANDVTLPIKEDDSSNAQLLRYR). Residues K154 and K179 each participate in a glycyl lysine isopeptide (Lys-Gly) (interchain with G-Cter in ubiquitin) cross-link. A helical membrane pass occupies residues 193-213 (VIAMVLELGIIVHSVVIGLSL). Over 214–224 (GATSDTCTIKG) the chain is Extracellular. A helical transmembrane segment spans residues 225 to 245 (LIAALCFHQMFEGMGLGGCIL). At 246 to 254 (QAEYTNMKK) the chain is on the cytoplasmic side. Residues 255–275 (FVMAFFFAVTTPFGIALGIAL) traverse the membrane as a helical segment. Residues 276-286 (STVYQDNSPKA) are Extracellular-facing. A helical transmembrane segment spans residues 287-307 (LITVGLLNACSAGLLIYMALV). Residues 308-326 (DLLAAEFMGPKLQGSIKMQ) lie on the Cytoplasmic side of the membrane. A helical membrane pass occupies residues 327–347 (FKCLIAALLGCGGMSIIAKWA).

The protein belongs to the ZIP transporter (TC 2.A.5) family. In terms of assembly, interacts with FREE1. Monoubiquitinated on several Lys residues. Monoubiquitination controls trafficking from the plasma membrane and targeting to the vacuole. Expressed in the external cell layers of the root including the lateral branching zone. Also detected in flowers before pollination.

It is found in the cell membrane. Its subcellular location is the early endosome. It localises to the golgi apparatus. The protein resides in the trans-Golgi network. The protein localises to the vacuole. High-affinity iron transporter that plays a key role in the uptake of iron from the rhizosphere across the plasma membrane in the root epidermal layer. Acts as the principal regulator of iron homeostasis in planta. Also mediates the heavy metals uptake under iron-deficiency by its ability to transport cobalt, cadmium, manganese and/or zinc ions. The polypeptide is Fe(2+) transport protein 1 (IRT1) (Arabidopsis thaliana (Mouse-ear cress)).